The primary structure comprises 559 residues: Potassium-transporting ATPase potassium-binding subunit (559 aa).

13 consecutive transmembrane segments (helical) span residues G5–S25, L27–W47, L63–W83, G132–I152, L170–I190, L253–A273, L283–V303, F327–V347, A356–V376, G379–G399, M416–M436, L484–A504, and G524–I544.

It belongs to the KdpA family. In terms of assembly, the system is composed of three essential subunits: KdpA, KdpB and KdpC.

It is found in the cell inner membrane. Its function is as follows. Part of the high-affinity ATP-driven potassium transport (or Kdp) system, which catalyzes the hydrolysis of ATP coupled with the electrogenic transport of potassium into the cytoplasm. This subunit binds the periplasmic potassium ions and delivers the ions to the membrane domain of KdpB through an intramembrane tunnel. The sequence is that of Potassium-transporting ATPase potassium-binding subunit from Salmonella dublin (strain CT_02021853).